Consider the following 139-residue polypeptide: uncharacterized protein (139 aa).

Residues 1–32 (MEFHDDKKNELQKKEEIITEAIDTLFQSSAFG) form the signal peptide. The region spanning 44–139 (SSLKDVQTTI…TLFFPKNKHE (96 aa)) is the sHSP domain.

This sequence belongs to the small heat shock protein (HSP20) family.

This is an uncharacterized protein from Bacillus subtilis (strain 168).